The following is a 1285-amino-acid chain: Period circadian protein homolog 1 (1285 aa).

The segment at 1–134 (MSGPLEGADG…SSEQSARART (134 aa)) is disordered. Residues 1 to 151 (MSGPLEGADG…LRELKLRLPP (151 aa)) are interaction with BTRC. 2 stretches are compositionally biased toward low complexity: residues 48 to 57 (NSNGSSGNES) and 64 to 115 (GASQ…ASSE). The span at 116-132 (QDNPSTSGCSSEQSARA) shows a compositional bias: polar residues. Thr121 is subject to Phosphothreonine; by CSNK1E. Phosphoserine; by CSNK1E is present on residues Ser122 and Ser126. The Nuclear export signal 1 motif lies at 138–147 (LMTALRELKL). PAS domains follow at residues 208–275 (ITSE…PFRL) and 348–414 (YEAP…KILQ). One can recognise a PAC domain in the interval 422–465 (HSPIRFCARNGEYVTMDTSWAGFVHPWSRKVAFVLGRHKVRTAP). Residues 489 to 498 (LSEQIHRLLL) carry the Nuclear export signal 2 motif. 2 disordered regions span residues 503-544 (SSSP…PAPV) and 643-694 (TKRK…KEPV). 2 stretches are compositionally biased toward low complexity: residues 523–533 (SPGSSSDSNGG) and 648–658 (ASSSSCTASSA). The required for phosphorylation by CSNK1E stretch occupies residues 592-811 (ELEVVPMPNQ…GLDSSSATPS (220 aa)). Phosphoserine is present on residues Ser657, Ser659, Ser700, and Ser811. 2 disordered regions span residues 802-867 (GLDS…PPST) and 931-1030 (LSQA…DALS). Positions 820–836 (VPPGRRHHCRSKAKRSR) match the Nuclear localization signal motif. The segment covering 823-840 (GRRHHCRSKAKRSRHHHT) has biased composition (basic residues). Pro residues predominate over residues 853–867 (SPVPPSGPWPPPPST). The segment covering 943–954 (ASHSPSPSLTPL) has biased composition (low complexity). Positions 967–979 (FNSRCSSPLQLNL) are enriched in polar residues. A phosphoserine mark is found at Ser972 and Ser973. The Nuclear export signal 3 signature appears at 975-982 (LQLNLLQL). Residues 1036 to 1040 (LELLL) carry the LXXLL motif. Low complexity predominate over residues 1045-1055 (RSGTGSAASGS). Disordered regions lie at residues 1045–1091 (RSGT…SKYF) and 1202–1285 (IQDP…NSTS). Residues 1056–1070 (LGSGLGSGSGSGSHE) show a composition bias toward gly residues. Low complexity predominate over residues 1071 to 1088 (GGSTSASITRSSQSSHTS). Positions 1142-1285 (SRDRASVLKQ…ALPAEENSTS (144 aa)) are CRY binding domain. The segment covering 1229–1241 (GEGGGGGGGGGEG) has biased composition (gly residues). The segment covering 1269 to 1285 (GGSSSSPALPAEENSTS) has biased composition (polar residues).

Homodimer. Component of the circadian core oscillator, which includes the CRY proteins, CLOCK or NPAS2, BMAL1 or BMAL2, CSNK1D and/or CSNK1E, TIMELESS, and the PER proteins. Interacts directly with TIMELESS, PER2, PER3, CRY1 and CRY2. Interacts with BMAL1 and CLOCK. Interacts with GPRASP1. Interacts (phosphorylated) with BTRC and FBXW11; the interactions trigger proteasomal degradation. Interacts with NONO, WDR5 and SFPQ. Interacts with USP2. Interacts with HNF4A. Post-translationally, phosphorylated on serine residues by CSNK1D, CSNK1E and probably also by CSNK1G2. Phosphorylation by CSNK1D or CSNK1E promotes nuclear location of PER proteins as well as ubiquitination and subsequent degradation. May be dephosphorylated by PP1. Ubiquitinated; requires phosphorylation by CSNK1E and interaction with BTRC and FBXW11. Deubiquitinated by USP2. In terms of tissue distribution, expressed in the brain, mainly in the suprachiasmatic nucleus (SCN). Expression also found in the harderian gland, lung, eye, intestine, liver and skeletal muscle.

It localises to the nucleus. The protein resides in the cytoplasm. In terms of biological role, transcriptional repressor which forms a core component of the circadian clock. The circadian clock, an internal time-keeping system, regulates various physiological processes through the generation of approximately 24 hour circadian rhythms in gene expression, which are translated into rhythms in metabolism and behavior. It is derived from the Latin roots 'circa' (about) and 'diem' (day) and acts as an important regulator of a wide array of physiological functions including metabolism, sleep, body temperature, blood pressure, endocrine, immune, cardiovascular, and renal function. Consists of two major components: the central clock, residing in the suprachiasmatic nucleus (SCN) of the brain, and the peripheral clocks that are present in nearly every tissue and organ system. Both the central and peripheral clocks can be reset by environmental cues, also known as Zeitgebers (German for 'timegivers'). The predominant Zeitgeber for the central clock is light, which is sensed by retina and signals directly to the SCN. The central clock entrains the peripheral clocks through neuronal and hormonal signals, body temperature and feeding-related cues, aligning all clocks with the external light/dark cycle. Circadian rhythms allow an organism to achieve temporal homeostasis with its environment at the molecular level by regulating gene expression to create a peak of protein expression once every 24 hours to control when a particular physiological process is most active with respect to the solar day. Transcription and translation of core clock components (CLOCK, NPAS2, BMAL1, BMAL2, PER1, PER2, PER3, CRY1 and CRY2) plays a critical role in rhythm generation, whereas delays imposed by post-translational modifications (PTMs) are important for determining the period (tau) of the rhythms (tau refers to the period of a rhythm and is the length, in time, of one complete cycle). A diurnal rhythm is synchronized with the day/night cycle, while the ultradian and infradian rhythms have a period shorter and longer than 24 hours, respectively. Disruptions in the circadian rhythms contribute to the pathology of cardiovascular diseases, cancer, metabolic syndromes and aging. A transcription/translation feedback loop (TTFL) forms the core of the molecular circadian clock mechanism. Transcription factors, CLOCK or NPAS2 and BMAL1 or BMAL2, form the positive limb of the feedback loop, act in the form of a heterodimer and activate the transcription of core clock genes and clock-controlled genes (involved in key metabolic processes), harboring E-box elements (5'-CACGTG-3') within their promoters. The core clock genes: PER1/2/3 and CRY1/2 which are transcriptional repressors form the negative limb of the feedback loop and interact with the CLOCK|NPAS2-BMAL1|BMAL2 heterodimer inhibiting its activity and thereby negatively regulating their own expression. This heterodimer also activates nuclear receptors NR1D1/2 and RORA/B/G, which form a second feedback loop and which activate and repress BMAL1 transcription, respectively. Regulates circadian target genes expression at post-transcriptional levels, but may not be required for the repression at transcriptional level. Controls PER2 protein decay. Represses CRY2 preventing its repression on CLOCK/BMAL1 target genes such as FXYD5 and SCNN1A in kidney and PPARA in liver. Besides its involvement in the maintenance of the circadian clock, has an important function in the regulation of several processes. Participates in the repression of glucocorticoid receptor NR3C1/GR-induced transcriptional activity by reducing the association of NR3C1/GR to glucocorticoid response elements (GREs) by BMAL1:CLOCK. Plays a role in the modulation of the neuroinflammatory state via the regulation of inflammatory mediators release, such as CCL2 and IL6. In spinal astrocytes, negatively regulates the MAPK14/p38 and MAPK8/JNK MAPK cascades as well as the subsequent activation of NFkappaB. Coordinately regulates the expression of multiple genes that are involved in the regulation of renal sodium reabsorption. Can act as gene expression activator in a gene and tissue specific manner, in kidney enhances WNK1 and SLC12A3 expression in collaboration with CLOCK. Modulates hair follicle cycling. Represses the CLOCK-BMAL1 induced transcription of BHLHE40/DEC1. The polypeptide is Period circadian protein homolog 1 (PER1) (Spalax judaei (Judean Mountains blind mole rat)).